A 580-amino-acid chain; its full sequence is Formate--tetrahydrofolate ligase (580 aa).

65 to 72 (TPHGEGKT) provides a ligand contact to ATP.

It belongs to the formate--tetrahydrofolate ligase family.

The enzyme catalyses (6S)-5,6,7,8-tetrahydrofolate + formate + ATP = (6R)-10-formyltetrahydrofolate + ADP + phosphate. It functions in the pathway one-carbon metabolism; tetrahydrofolate interconversion. The chain is Formate--tetrahydrofolate ligase from Shewanella baltica (strain OS223).